Here is an 838-residue protein sequence, read N- to C-terminus: Protein translocase subunit SecA (838 aa).

ATP contacts are provided by residues glutamine 86, 104–108 (GEGKT), and aspartate 493. Disordered stretches follow at residues 517–536 (RRID…PGSS) and 789–838 (KVAE…CCGQ). The segment covering 801-819 (TDGDSKAKRQPVRKKETVG) has biased composition (basic and acidic residues). Residues cysteine 824, cysteine 826, cysteine 835, and cysteine 836 each contribute to the Zn(2+) site.

This sequence belongs to the SecA family. In terms of assembly, monomer and homodimer. Part of the essential Sec protein translocation apparatus which comprises SecA, SecYEG and auxiliary proteins SecDF. Other proteins may also be involved. Zn(2+) is required as a cofactor.

The protein resides in the cell membrane. The protein localises to the cytoplasm. The enzyme catalyses ATP + H2O + cellular proteinSide 1 = ADP + phosphate + cellular proteinSide 2.. Part of the Sec protein translocase complex. Interacts with the SecYEG preprotein conducting channel. Has a central role in coupling the hydrolysis of ATP to the transfer of proteins into and across the cell membrane, serving as an ATP-driven molecular motor driving the stepwise translocation of polypeptide chains across the membrane. In Halalkalibacterium halodurans (strain ATCC BAA-125 / DSM 18197 / FERM 7344 / JCM 9153 / C-125) (Bacillus halodurans), this protein is Protein translocase subunit SecA.